Reading from the N-terminus, the 2388-residue chain is Hybrid signal transduction histidine kinase M (2388 aa).

Disordered regions lie at residues 1–32 (MSNY…NNFN), 42–61 (FNTP…NSIS), 69–111 (NECN…STPI), 123–209 (NRSN…NAYP), 237–337 (TLLN…SPKL), 361–421 (SPHG…YNDN), 430–449 (TRNT…SSSF), and 486–542 (IYTP…NNNE). Over residues 69–82 (NECNSGGEQSPKIK) the composition is skewed to polar residues. 3 stretches are compositionally biased toward low complexity: residues 83 to 110 (TNNN…KSTP), 125 to 206 (SNLN…SNSN), and 242 to 288 (SSNN…NNGG). Positions 293–306 (QFISSDNKYNTVGN) are enriched in polar residues. Basic residues predominate over residues 309 to 322 (HHHHHHQLHNHRHS). Low complexity-rich tracts occupy residues 325-337 (QGSS…SPKL), 361-399 (SPHG…NQNN), 410-419 (NNSNDSFDYN), and 432-449 (NTGY…SSSF). Positions 489 to 505 (PPYPQPYPQPPQLPPPS) are enriched in pro residues. Low complexity predominate over residues 506 to 541 (SSSSLSKENDNVDNNNTNNNNNNNNNNNNNNNNNNN). 4 helical membrane passes run 550–570 (TMNL…FLMV), 589–609 (FILI…LLVV), 645–665 (YIFL…NLFF), and 679–699 (NIST…SHIP). A disordered region spans residues 732–888 (NNDNKNKIND…NNNEEDDEEE (157 aa)). The span at 735–744 (NKNKINDKSD) shows a compositional bias: basic and acidic residues. Residues 745 to 880 (NSNSITNNNN…NNNNNNNNNN (136 aa)) are compositionally biased toward low complexity. Helical transmembrane passes span 896–916 (FQIF…LIVL), 953–973 (VQFQ…LLLV), and 1025–1045 (CSVG…WMSI). Residues 1093–1499 (RLVQNTGSII…VFELQVPMKC (407 aa)) form the Histidine kinase domain. Over residues 1236–1257 (PIHHHRHHHRHHHHHHHHHHHH) the composition is skewed to basic residues. The interval 1236-1410 (PIHHHRHHHR…INNNINNNNN (175 aa)) is disordered. A compositionally biased stretch (acidic residues) spans 1260-1274 (DDDDYDDDNDDDNNT). The segment covering 1286-1315 (LSDKIKDNQDENLELKKSNNDKIIENKENQ) has biased composition (basic and acidic residues). Over residues 1316–1410 (ENNNNNNNNN…INNNINNNNN (95 aa)) the composition is skewed to low complexity. Positions 1541–1656 (KILVIDDNPN…QLTVLSQLLP (116 aa)) constitute a Response regulatory 1 domain. Asp1592 carries the 4-aspartylphosphate modification. 5 disordered regions span residues 1666 to 1702 (SNQN…NIDF), 1960 to 2022 (GNNS…NSSN), 2036 to 2121 (CKGD…DIIN), 2133 to 2183 (QQQL…VKSS), and 2218 to 2256 (NQLN…NNND). Residues 1676–1696 (SNGGGGGGGGGGGGGGGGGSG) are compositionally biased toward gly residues. The segment covering 1974–1985 (TNNNTTTTTTTT) has biased composition (low complexity). Residues 1986 to 2010 (QPKKSPILTSSNGSDKSEGSTGSNR) show a composition bias toward polar residues. Low complexity predominate over residues 2054–2064 (DSSSSSSSSDS). A compositionally biased stretch (basic and acidic residues) spans 2065 to 2076 (HGQDDHSYRLED). Composition is skewed to low complexity over residues 2078 to 2109 (SISS…SGIN) and 2133 to 2165 (QQQL…LPIP). Residues 2169-2183 (INSSGASSGIKVKSS) show a composition bias toward polar residues. Residues 2262 to 2383 (NILLVEDNLV…LLISLLKKLV (122 aa)) enclose the Response regulatory 2 domain. Position 2313 is a 4-aspartylphosphate (Asp2313).

In terms of processing, activation probably requires transfer of a phosphate group between a histidine in the kinase core (transmitter) domain and an aspartate of the receiver domain.

It is found in the membrane. The enzyme catalyses ATP + protein L-histidine = ADP + protein N-phospho-L-histidine.. Functionally, acts as a receptor histidine kinase for a signal transduction pathway. This protein undergoes an ATP-dependent autophosphorylation at a conserved histidine residue in the kinase core, and a phosphoryl group is then transferred to a conserved aspartate residue in the receiver domain. This is Hybrid signal transduction histidine kinase M (dhkM) from Dictyostelium discoideum (Social amoeba).